Here is a 127-residue protein sequence, read N- to C-terminus: Small ribosomal subunit protein bS6 (127 aa).

The segment covering 106 to 117 has biased composition (basic and acidic residues); sequence ERKAQSEKKEAE. The tract at residues 106 to 127 is disordered; the sequence is ERKAQSEKKEAEVSEGEGGTEA. A compositionally biased stretch (acidic residues) spans 118–127; that stretch reads VSEGEGGTEA.

The protein belongs to the bacterial ribosomal protein bS6 family.

In terms of biological role, binds together with bS18 to 16S ribosomal RNA. This Thermotoga neapolitana (strain ATCC 49049 / DSM 4359 / NBRC 107923 / NS-E) protein is Small ribosomal subunit protein bS6.